Consider the following 283-residue polypeptide: Mitochondrial intermembrane space import and assembly protein 40 (283 aa).

The N-terminal 35 residues, 1–35, are a transit peptide targeting the mitochondrion; that stretch reads MFRPASRALLRAPTPAVGVARGPTRRFISSSTGST. The Mitochondrial matrix portion of the chain corresponds to 36–46; sequence KPRSWKNTFIR. The chain crosses the membrane as a helical; Signal-anchor for type II membrane protein span at residues 47-64; sequence VGLASGAVYYYNTSSVFA. Residues 65-283 lie on the Mitochondrial intermembrane side of the membrane; it reads ETPSLSFRPE…EKTPEQQTEK (219 aa). Residues 72-136 are disordered; sequence RPEAQPKHED…SAEELEAEAD (65 aa). The segment covering 91-101 has biased composition (basic and acidic residues); sequence IKPKSREEKKA. Residues 102–119 show a composition bias toward low complexity; the sequence is PAAAADAAATPASTGANA. Disulfide bonds link C152-C154, C163-C196, and C173-C186. The CHCH domain occupies 160–204; it reads YGPCGEEFRAAFSCFVYSEEEPKGMDCIDKFKAMQDCFRAHPDVY. 2 short sequence motifs (cx9C motif) span residues 163–173 and 186–196; these read CGEEFRAAFSC and CIDKFKAMQDC. Residues 211–283 are disordered; it reads DEEAGAEANA…EKTPEQQTEK (73 aa). Basic and acidic residues-rich tracts occupy residues 237 to 251 and 272 to 283; these read VEKHEQAKEVRDEVK and EQEKTPEQQTEK.

Monomer. Requires Cu(2+) as cofactor. The cofactor is Zn(2+).

The protein localises to the mitochondrion inner membrane. Required for the import and folding of small cysteine-containing proteins (small Tim) in the mitochondrial intermembrane space (IMS). Forms a redox cycle with ERV1 that involves a disulfide relay system. Precursor proteins to be imported into the IMS are translocated in their reduced form into the mitochondria. The oxidized form of MIA40 forms a transient intermolecular disulfide bridge with the reduced precursor protein, resulting in oxidation of the precursor protein that now contains an intramolecular disulfide bond and is able to undergo folding in the IMS. This Emericella nidulans (strain FGSC A4 / ATCC 38163 / CBS 112.46 / NRRL 194 / M139) (Aspergillus nidulans) protein is Mitochondrial intermembrane space import and assembly protein 40 (mia40).